The chain runs to 1194 residues: DNA polymerase catalytic subunit (1194 aa).

It belongs to the DNA polymerase type-B family. In terms of assembly, forms a complex with the ssDNA-binding protein, the DNA polymerase processivity factor, and the alkaline exonuclease. Interacts with the helicase-primase complex composed of the primase, the helicase and the primase-associated factor; this interaction may coordinate leading and lagging strand DNA synthesis at the replication fork.

It localises to the host nucleus. The catalysed reaction is DNA(n) + a 2'-deoxyribonucleoside 5'-triphosphate = DNA(n+1) + diphosphate. It carries out the reaction Endonucleolytic cleavage to 5'-phosphomonoester.. Replicates viral genomic DNA. The replication complex is composed of six viral proteins: the DNA polymerase, processivity factor, primase, primase-associated factor, helicase, and ssDNA-binding protein. Additionally, the polymerase contains an intrinsic ribonuclease H (RNase H) activity that specifically degrades RNA/DNA heteroduplexes or duplex DNA substrates in the 5' to 3' direction. Therefore, it can catalyze the excision of the RNA primers that initiate the synthesis of Okazaki fragments at a replication fork during viral DNA replication. The polypeptide is DNA polymerase catalytic subunit (Varicella-zoster virus (strain Oka vaccine) (HHV-3)).